The following is a 581-amino-acid chain: Metal transporter Nramp7.1 (581 aa).

N11 and N19 each carry an N-linked (GlcNAc...) asparagine glycan. 7 helical membrane-spanning segments follow: residues 57-77, 90-110, 146-166, 181-201, 224-244, 270-290, and 307-327; these read FLSY…PGNL, ELLW…SLAA, YCLW…EGII, LLIG…WVGV, LLIA…MSYV, IALL…ALVL, and YFLI…LAVI. Residue N338 is glycosylated (N-linked (GlcNAc...) asparagine). Transmembrane regions (helical) follow at residues 370–390, 409–429, 434–454, 473–493, and 513–533; these read IYAI…TYAG, LVTR…GGSS, LIII…FALI, IYII…NIYY, and VFIG…VIYL. Residues 551–581 form a disordered region; sequence PQQQANMENGLGPEMERVPYREDLADIPLPE. Residues 564–574 are compositionally biased toward basic and acidic residues; that stretch reads EMERVPYREDL.

Belongs to the NRAMP (TC 2.A.55) family.

The protein resides in the membrane. Probable divalent metal transporter. In Populus trichocarpa (Western balsam poplar), this protein is Metal transporter Nramp7.1.